A 193-amino-acid polypeptide reads, in one-letter code: Xanthine phosphoribosyltransferase (193 aa).

Xanthine is bound by residues leucine 20 and asparagine 27. 128 to 132 (ASGGT) serves as a coordination point for 5-phospho-alpha-D-ribose 1-diphosphate. A xanthine-binding site is contributed by lysine 156.

It belongs to the purine/pyrimidine phosphoribosyltransferase family. Xpt subfamily. In terms of assembly, homodimer.

The protein resides in the cytoplasm. The catalysed reaction is XMP + diphosphate = xanthine + 5-phospho-alpha-D-ribose 1-diphosphate. It participates in purine metabolism; XMP biosynthesis via salvage pathway; XMP from xanthine: step 1/1. Functionally, converts the preformed base xanthine, a product of nucleic acid breakdown, to xanthosine 5'-monophosphate (XMP), so it can be reused for RNA or DNA synthesis. The polypeptide is Xanthine phosphoribosyltransferase (Deinococcus deserti (strain DSM 17065 / CIP 109153 / LMG 22923 / VCD115)).